The primary structure comprises 184 residues: Probable chemoreceptor glutamine deamidase CheD (184 aa).

It belongs to the CheD family.

The enzyme catalyses L-glutaminyl-[protein] + H2O = L-glutamyl-[protein] + NH4(+). Probably deamidates glutamine residues to glutamate on methyl-accepting chemotaxis receptors (MCPs), playing an important role in chemotaxis. The sequence is that of Probable chemoreceptor glutamine deamidase CheD from Rhizobium leguminosarum bv. trifolii (strain WSM2304).